Consider the following 582-residue polypeptide: Threonine--tRNA ligase (582 aa).

Positions 185-478 (DHRKLGKELE…LTEQYGGAFP (294 aa)) are catalytic. The Zn(2+) site is built by Cys278, His329, and His455.

Belongs to the class-II aminoacyl-tRNA synthetase family. Homodimer. Requires Zn(2+) as cofactor.

It localises to the cytoplasm. The enzyme catalyses tRNA(Thr) + L-threonine + ATP = L-threonyl-tRNA(Thr) + AMP + diphosphate + H(+). Functionally, catalyzes the attachment of threonine to tRNA(Thr) in a two-step reaction: L-threonine is first activated by ATP to form Thr-AMP and then transferred to the acceptor end of tRNA(Thr). Also edits incorrectly charged L-seryl-tRNA(Thr). This chain is Threonine--tRNA ligase, found in Dehalococcoides mccartyi (strain ATCC BAA-2266 / KCTC 15142 / 195) (Dehalococcoides ethenogenes (strain 195)).